Here is a 1202-residue protein sequence, read N- to C-terminus: Protein jagged-2 (1202 aa).

At 1–1037 the chain is on the extracellular side; it reads GACCDGDGRT…ETVVMGGSST (1037 aa). N-linked (GlcNAc...) asparagine glycosylation occurs at Asn107. Residues 150–194 form the DSL domain; it reads VRCDENYYSATCNKFCRPRNDFFGHYTCDQYGNKACMDGWMGKEC. Disulfide bonds link Cys152–Cys161, Cys165–Cys177, Cys185–Cys194, Cys199–Cys210, Cys203–Cys216, Cys218–Cys227, Cys230–Cys241, Cys236–Cys247, Cys249–Cys258, Cys265–Cys277, Cys271–Cys287, Cys289–Cys298, Cys305–Cys316, Cys310–Cys325, Cys327–Cys336, Cys343–Cys354, Cys348–Cys363, Cys365–Cys374, Cys381–Cys392, Cys386–Cys401, Cys403–Cys412, Cys419–Cys429, Cys423–Cys438, Cys440–Cys449, Cys456–Cys467, Cys461–Cys476, Cys478–Cys487, Cys495–Cys506, Cys500–Cys515, Cys517–Cys526, Cys544–Cys567, Cys561–Cys577, Cys579–Cys588, Cys595–Cys606, Cys600–Cys615, Cys617–Cys626, Cys633–Cys644, Cys638–Cys653, Cys655–Cys664, Cys671–Cys682, Cys676–Cys691, and Cys693–Cys702. An EGF-like 1 domain is found at 195–228; the sequence is KEAVCKQGCNLLHGGCTVPGECRCSYGWQGKFCD. The EGF-like 2; atypical domain maps to 229-259; the sequence is ECVPYPGCVHGSCVEPWHCDCETNWGGLLCD. 2 consecutive EGF-like domains span residues 261–299 and 301–337; these read DLNY…KNCE and AEHA…PTCA. The EGF-like 5; calcium-binding domain maps to 339–375; the sequence is DIDECASNPCAAGGTCVDQVDGFECICPEQWVGATCQ. Residues 377–413 enclose the EGF-like 6; calcium-binding domain; sequence DANECEGKPCLNAFSCKNLIGGYYCDCLPGWKGANCH. The EGF-like 7; calcium-binding domain maps to 415 to 450; it reads NINDCHGQCQHGGTCKDLVNGYQCVCPRGFGGRHCE. 2 consecutive EGF-like domains span residues 452 to 488 and 490 to 527; these read EYYK…PLCE and DVDL…KNCS. Asn525 carries an N-linked (GlcNAc...) asparagine glycan. Residues 529 to 589 enclose the EGF-like 10; atypical domain; the sequence is PRETCPGGAC…DSGFTGTYCH (61 aa). A glycan (N-linked (GlcNAc...) asparagine) is linked at Asn574. The region spanning 591 to 627 is the EGF-like 11; calcium-binding domain; sequence NIDDCMGQPCRNGGTCIDEVDSFACFCPSGWEGELCD. The region spanning 629 to 665 is the EGF-like 12; calcium-binding domain; sequence NPNDCLPDPCHSRGRCYDLVNDFYCVCDDGWKDKTCH. EGF-like domains lie at 667-703 and 706-742; these read REFQ…STCT and KNSS…RTCT. Asn707 carries N-linked (GlcNAc...) asparagine glycosylation. Cystine bridges form between Cys710–Cys721, Cys715–Cys730, Cys732–Cys741, Cys748–Cys759, Cys753–Cys768, Cys770–Cys779, Cys786–Cys797, Cys791–Cys806, and Cys808–Cys817. The region spanning 744–780 is the EGF-like 15; calcium-binding domain; it reads NTNDCNPLPCYNGGICVDGVNWFRCECAPGFAGPDCR. The EGF-like 16; calcium-binding domain occupies 782–818; that stretch reads NIDECQSSPCAYGATCVDEINGYRCSCPPGRSGPRCQ. N-linked (GlcNAc...) asparagine glycosylation is present at Asn1015. A helical transmembrane segment spans residues 1038-1058; the sequence is GLLVPVLCSVFSVLWLACMVI. Topologically, residues 1059–1202 are cytoplasmic; sequence CVWWTRKRRK…TKDVRCAGRE (144 aa). Composition is skewed to basic and acidic residues over residues 1070–1080, 1147–1159, and 1185–1202; these read RERSRLPRDES, LSRG…RSRE, and VDNR…AGRE. The segment at 1070–1202 is disordered; the sequence is RERSRLPRDE…TKDVRCAGRE (133 aa). The residue at position 1080 (Ser1080) is a Phosphoserine.

Its subcellular location is the membrane. Functionally, putative Notch ligand involved in the mediation of Notch signaling. May have a role in neurogenesis in the peripheral nervous system, limb development and in the adult brain. The chain is Protein jagged-2 (Jag2) from Rattus norvegicus (Rat).